The sequence spans 299 residues: Probable lipid kinase YegS-like (299 aa).

The 129-residue stretch at 1-129 (MSERKALLIL…IDLGEVGGQM (129 aa)) folds into the DAGKc domain. ATP is bound by residues Thr-39, 65 to 71 (GDGTLRD), and Thr-92. Mg(2+)-binding residues include Leu-210, Asp-213, and Leu-215. Glu-268 (proton acceptor) is an active-site residue.

Belongs to the diacylglycerol/lipid kinase family. YegS lipid kinase subfamily. Mg(2+) is required as a cofactor. Ca(2+) serves as cofactor.

It localises to the cytoplasm. Its function is as follows. Probably phosphorylates lipids; the in vivo substrate is unknown. This chain is Probable lipid kinase YegS-like, found in Pseudomonas fluorescens (strain ATCC BAA-477 / NRRL B-23932 / Pf-5).